We begin with the raw amino-acid sequence, 446 residues long: Chromosomal replication initiator protein DnaA (446 aa).

The interval 1 to 92 (MENISDLWNS…SQAEEEIDLP (92 aa)) is domain I, interacts with DnaA modulators. The segment at 93-109 (PAKPNAAQDDSNHLPQS) is domain II. A domain III, AAA+ region region spans residues 110–326 (MLNPKYTFDT…GALIRVVAYS (217 aa)). Positions 154, 156, 157, and 158 each coordinate ATP. Residues 327 to 446 (SLINKDINAD…QVEEINDILK (120 aa)) are domain IV, binds dsDNA.

The protein belongs to the DnaA family. In terms of assembly, oligomerizes as a right-handed, spiral filament on DNA at oriC.

The protein resides in the cytoplasm. Its function is as follows. Plays an essential role in the initiation and regulation of chromosomal replication. ATP-DnaA binds to the origin of replication (oriC) to initiate formation of the DNA replication initiation complex once per cell cycle. Binds the DnaA box (a 9 base pair repeat at the origin) and separates the double-stranded (ds)DNA. Forms a right-handed helical filament on oriC DNA; dsDNA binds to the exterior of the filament while single-stranded (ss)DNA is stabiized in the filament's interior. The ATP-DnaA-oriC complex binds and stabilizes one strand of the AT-rich DNA unwinding element (DUE), permitting loading of DNA polymerase. After initiation quickly degrades to an ADP-DnaA complex that is not apt for DNA replication. Binds acidic phospholipids. This is Chromosomal replication initiator protein DnaA from Bacillus anthracis (strain A0248).